The following is a 293-amino-acid chain: GPN-loop GTPase 3 (293 aa).

13-18 (GAGKST) contributes to the GTP binding site. The short motif at 70–72 (GPN) is the Gly-Pro-Asn (GPN)-loop; involved in dimer interface element. 176–179 (SKMD) is a GTP binding site. Basic and acidic residues predominate over residues 272–281 (HEAQEPREPN). The tract at residues 272–293 (HEAQEPREPNDEQDVDYEDADI) is disordered. Residues 282–293 (DEQDVDYEDADI) show a composition bias toward acidic residues.

It belongs to the GPN-loop GTPase family. Heterodimers with gpn1 or gpn2. Binds to RNA polymerase II (RNAPII).

In terms of biological role, small GTPase required for proper nuclear import of RNA polymerase II and III (RNAPII and RNAPIII). May act at an RNAP assembly step prior to nuclear import. The chain is GPN-loop GTPase 3 from Aspergillus fumigatus (strain ATCC MYA-4609 / CBS 101355 / FGSC A1100 / Af293) (Neosartorya fumigata).